A 156-amino-acid chain; its full sequence is Small ribosomal subunit protein uS7 (156 aa).

This sequence belongs to the universal ribosomal protein uS7 family. In terms of assembly, part of the 30S ribosomal subunit. Contacts proteins S9 and S11.

In terms of biological role, one of the primary rRNA binding proteins, it binds directly to 16S rRNA where it nucleates assembly of the head domain of the 30S subunit. Is located at the subunit interface close to the decoding center, probably blocks exit of the E-site tRNA. This chain is Small ribosomal subunit protein uS7, found in Limosilactobacillus reuteri (strain DSM 20016) (Lactobacillus reuteri).